The sequence spans 402 residues: E3 ubiquitin-protein ligase makorin-2 (402 aa).

C3H1-type zinc fingers lie at residues 2-29 (TTKQ…HDPS), 31-58 (SKPS…HVKL), and 141-168 (QDLP…HGDK). Residues 169 to 198 (CEVCGLQVLDPHNPEQRSMHEKMCLLAFEA) form a makorin-type Cys-His region. The RING-type zinc-finger motif lies at 214 to 268 (CSICMEVVVQKMNPSDRRFGILSSCCHVFCLACIRKWRCTRNFSNKIIKSCPECR). The segment at 297-326 (GVGKKPCKYFDQGRGSCPFGGKCLYLHALP) adopts a C3H1-type 4 zinc-finger fold.

It is found in the cytoplasm. It localises to the nucleus. The catalysed reaction is S-ubiquitinyl-[E2 ubiquitin-conjugating enzyme]-L-cysteine + [acceptor protein]-L-lysine = [E2 ubiquitin-conjugating enzyme]-L-cysteine + N(6)-ubiquitinyl-[acceptor protein]-L-lysine.. Its pathway is protein modification; protein ubiquitination. Functionally, E3 ubiquitin ligase catalyzing the covalent attachment of ubiquitin moieties onto substrate proteins. Inhibits neurogenesis and axis formation during embryonic development by modulating the phosphatidylinositol 3-kinase (PI3K) pathway. Acts downstream of PI3K and akt1 to up-regulate gsk3b mRNA expression. The polypeptide is E3 ubiquitin-protein ligase makorin-2 (Takifugu rubripes (Japanese pufferfish)).